A 127-amino-acid polypeptide reads, in one-letter code: uncharacterized protein (127 aa).

This is an uncharacterized protein from Archaeoglobus fulgidus (strain ATCC 49558 / DSM 4304 / JCM 9628 / NBRC 100126 / VC-16).